The following is a 325-amino-acid chain: uncharacterized protein (325 aa).

A signal peptide spans Met1 to Ala26. Residues Gly41–His60 show a composition bias toward polar residues. Disordered stretches follow at residues Gly41 to Trp110 and Gly147 to Lys189. The segment covering Gly147–Pro157 has biased composition (low complexity).

As to quaternary structure, binds to numerous extracellular matrix proteins. Expressed in skin and tonsils.

Its subcellular location is the secreted. It localises to the extracellular space. It is found in the extracellular matrix. This is an uncharacterized protein from Homo sapiens (Human).